A 139-amino-acid polypeptide reads, in one-letter code: Putative truncated protein trichome birefringence-like 46 (139 aa).

Belongs to the PC-esterase family. TBL subfamily.

In Arabidopsis thaliana (Mouse-ear cress), this protein is Putative truncated protein trichome birefringence-like 46 (TBL46).